The primary structure comprises 172 residues: Large ribosomal subunit protein uL10 (172 aa).

This sequence belongs to the universal ribosomal protein uL10 family. In terms of assembly, part of the ribosomal stalk of the 50S ribosomal subunit. The N-terminus interacts with L11 and the large rRNA to form the base of the stalk. The C-terminus forms an elongated spine to which L12 dimers bind in a sequential fashion forming a multimeric L10(L12)X complex.

In terms of biological role, forms part of the ribosomal stalk, playing a central role in the interaction of the ribosome with GTP-bound translation factors. This is Large ribosomal subunit protein uL10 from Idiomarina loihiensis (strain ATCC BAA-735 / DSM 15497 / L2-TR).